The sequence spans 112 residues: Small ribosomal subunit protein bS6 (112 aa).

This sequence belongs to the bacterial ribosomal protein bS6 family.

Binds together with bS18 to 16S ribosomal RNA. This Azobacteroides pseudotrichonymphae genomovar. CFP2 protein is Small ribosomal subunit protein bS6.